A 158-amino-acid polypeptide reads, in one-letter code: Secreted frizzled-related protein 1 (158 aa).

Residues 1–34 enclose the FZ domain; that stretch reads VRDSCEPVMQFFGFYWPEMLKCDKFPEGDVCIAM. An N-linked (GlcNAc...) asparagine glycan is attached at Asn-38. Cystine bridges form between Cys-51–Cys-121 and Cys-68–Cys-123. An NTR domain is found at 51–158; the sequence is CPPCDNELKS…IHKWDKKNKE (108 aa).

The protein belongs to the secreted frizzled-related protein (sFRP) family. As to quaternary structure, interacts with WNT4, WNT1, WNT2, WNT8, MYOC and FRZD6.

Its subcellular location is the secreted. Functionally, soluble frizzled-related proteins (sFRPS) function as modulators of Wnt signaling through direct interaction with Wnts. They have a role in regulating cell growth and differentiation in specific cell types. SFRP1 decreases intracellular beta-catenin levels. Has antiproliferative effects on vascular cells, in vitro and in vivo, and can induce, in vivo, an angiogenic response. In vascular cell cycle, delays the G1 phase and entry into the S phase. In kidney development, inhibits tubule formation and bud growth in metanephroi. Inhibits WNT1/WNT4-mediated TCF-dependent transcription. The protein is Secreted frizzled-related protein 1 (Sfrp1) of Rattus norvegicus (Rat).